The following is a 119-amino-acid chain: Iron-sulfur cluster insertion protein ErpA (119 aa).

The iron-sulfur cluster site is built by C47, C111, and C113.

It belongs to the HesB/IscA family. Homodimer. Requires iron-sulfur cluster as cofactor.

In terms of biological role, required for insertion of 4Fe-4S clusters for at least IspG. This chain is Iron-sulfur cluster insertion protein ErpA, found in Alcanivorax borkumensis (strain ATCC 700651 / DSM 11573 / NCIMB 13689 / SK2).